The sequence spans 224 residues: Probable 2' cyclic ADP-D-ribose synthase BdTIR (224 aa).

In terms of domain architecture, TIR spans 51-178 (SRYEVFINHR…RFKFALREAK (128 aa)). NAD(+)-binding positions include 60-65 (RGVDTK) and Gly-93. Glu-127 is an active-site residue.

In terms of assembly, homodimer.

It catalyses the reaction NAD(+) + H2O = ADP-D-ribose + nicotinamide + H(+). The enzyme catalyses NADP(+) + H2O = ADP-D-ribose 2'-phosphate + nicotinamide + H(+). The catalysed reaction is NAD(+) = 2'cADPR + nicotinamide + H(+). In terms of biological role, an NAD(+) hydrolase (NADase). Upon activation catalyzes cleavage of NAD(+) into ADP-D-ribose (ADPR) and nicotinamide; NAD(+) cleavage triggers a defense system that promotes cell death. In addition to ADPR, also generates a cyclization variant of cyclic ADPR termed v-cADPR (2'cADPR). Also hydrolyzes NADP(+), but not other NAD(+)-related molecules. v-cADPR activates ThsA, an NAD(+) hydrolase in B.cereus (AC J8G6Z1). Probably makes 2'cADPR; the cADPR made by this protein is bound by cmTad1 (AC P0DW61) and activates ThsA from B.cereus. Boiling cmTad1 bound to the cyclic nucleotide releases 2'cADPR, strongly suggesting it is the product of this protein. The chain is Probable 2' cyclic ADP-D-ribose synthase BdTIR from Brachypodium distachyon (Purple false brome).